A 357-amino-acid polypeptide reads, in one-letter code: 3-isopropylmalate dehydrogenase (357 aa).

76 to 89 (GPQWDTIDPALRPE) serves as a coordination point for NAD(+). Residues Arg96, Arg106, Arg134, and Asp224 each coordinate substrate. Residues Asp224, Asp248, and Asp252 each coordinate Mg(2+). NAD(+) is bound at residue 282 to 294 (GSAPDIAGKGIAN).

The protein belongs to the isocitrate and isopropylmalate dehydrogenases family. LeuB type 1 subfamily. In terms of assembly, homodimer. It depends on Mg(2+) as a cofactor. Mn(2+) serves as cofactor.

It localises to the cytoplasm. It carries out the reaction (2R,3S)-3-isopropylmalate + NAD(+) = 4-methyl-2-oxopentanoate + CO2 + NADH. Its pathway is amino-acid biosynthesis; L-leucine biosynthesis; L-leucine from 3-methyl-2-oxobutanoate: step 3/4. Functionally, catalyzes the oxidation of 3-carboxy-2-hydroxy-4-methylpentanoate (3-isopropylmalate) to 3-carboxy-4-methyl-2-oxopentanoate. The product decarboxylates to 4-methyl-2 oxopentanoate. The chain is 3-isopropylmalate dehydrogenase from Xanthomonas axonopodis pv. citri (strain 306).